The sequence spans 360 residues: N5-carboxyaminoimidazole ribonucleotide synthase (360 aa).

ATP is bound by residues Arg98, Lys138, 143–149, 173–176, Glu181, His204, and 255–256; these read GYDGKGQ, EGFV, and NE. Positions 102–285 constitute an ATP-grasp domain; it reads KSMFKDLGIP…QFENHLRAVA (184 aa).

It belongs to the PurK/PurT family. In terms of assembly, homodimer.

The enzyme catalyses 5-amino-1-(5-phospho-beta-D-ribosyl)imidazole + hydrogencarbonate + ATP = 5-carboxyamino-1-(5-phospho-D-ribosyl)imidazole + ADP + phosphate + 2 H(+). It participates in purine metabolism; IMP biosynthesis via de novo pathway; 5-amino-1-(5-phospho-D-ribosyl)imidazole-4-carboxylate from 5-amino-1-(5-phospho-D-ribosyl)imidazole (N5-CAIR route): step 1/2. Its function is as follows. Catalyzes the ATP-dependent conversion of 5-aminoimidazole ribonucleotide (AIR) and HCO(3)(-) to N5-carboxyaminoimidazole ribonucleotide (N5-CAIR). In Pseudomonas aeruginosa (strain ATCC 15692 / DSM 22644 / CIP 104116 / JCM 14847 / LMG 12228 / 1C / PRS 101 / PAO1), this protein is N5-carboxyaminoimidazole ribonucleotide synthase.